The chain runs to 372 residues: Chaperone protein DnaJ (372 aa).

The J domain maps to 5 to 70; sequence DYYDLLEVGR…EKRAGYDRYG (66 aa). The CR-type zinc-finger motif lies at 134–212; sequence GIQAPIHYVT…CGGSGRRRDE (79 aa). Cys147, Cys150, Cys164, Cys167, Cys186, Cys189, Cys200, and Cys203 together coordinate Zn(2+). 4 CXXCXGXG motif repeats span residues 147-154, 164-171, 186-193, and 200-207; these read CDTCQGTG, CHTCQGSG, CTTCYGEG, and CKKCGGSG.

Belongs to the DnaJ family. In terms of assembly, homodimer. Zn(2+) serves as cofactor.

The protein localises to the cytoplasm. Its function is as follows. Participates actively in the response to hyperosmotic and heat shock by preventing the aggregation of stress-denatured proteins and by disaggregating proteins, also in an autonomous, DnaK-independent fashion. Unfolded proteins bind initially to DnaJ; upon interaction with the DnaJ-bound protein, DnaK hydrolyzes its bound ATP, resulting in the formation of a stable complex. GrpE releases ADP from DnaK; ATP binding to DnaK triggers the release of the substrate protein, thus completing the reaction cycle. Several rounds of ATP-dependent interactions between DnaJ, DnaK and GrpE are required for fully efficient folding. Also involved, together with DnaK and GrpE, in the DNA replication of plasmids through activation of initiation proteins. The chain is Chaperone protein DnaJ from Wolbachia pipientis wMel.